The chain runs to 571 residues: Septation ring formation regulator EzrA (571 aa).

The Extracellular segment spans residues 1-3 (MYY). The helical transmembrane segment at 4–22 (MLIGFIIVVIAIISAGYIL) threads the bilayer. The Cytoplasmic segment spans residues 23–571 (KRKHYQRINE…ESKVSVDDIE (549 aa)). Coiled-coil stretches lie at residues 169-214 (VETK…AQME), 249-298 (AQME…DTLE), 326-374 (DALA…ASGE), 400-438 (KFAEELRSLRKDELEARDDAERMRRAIVTLDRKMERERL), and 474-529 (TQDW…ENHF).

It belongs to the EzrA family.

The protein localises to the cell membrane. In terms of biological role, negative regulator of FtsZ ring formation; modulates the frequency and position of FtsZ ring formation. Inhibits FtsZ ring formation at polar sites. Interacts either with FtsZ or with one of its binding partners to promote depolymerization. The sequence is that of Septation ring formation regulator EzrA from Listeria welshimeri serovar 6b (strain ATCC 35897 / DSM 20650 / CCUG 15529 / CIP 8149 / NCTC 11857 / SLCC 5334 / V8).